We begin with the raw amino-acid sequence, 93 residues long: Small ribosomal subunit protein uS19 (93 aa).

The protein belongs to the universal ribosomal protein uS19 family.

Functionally, protein S19 forms a complex with S13 that binds strongly to the 16S ribosomal RNA. The sequence is that of Small ribosomal subunit protein uS19 from Kocuria rhizophila (strain ATCC 9341 / DSM 348 / NBRC 103217 / DC2201).